We begin with the raw amino-acid sequence, 580 residues long: Laccase-5 (580 aa).

The N-terminal stretch at 1 to 25 (MDVTKSLLCFISFVAFLLFSSVAEA) is a signal peptide. Plastocyanin-like domains are found at residues 34–150 (IIQA…PPAG) and 160–312 (RNVP…YKSA). An N-linked (GlcNAc...) asparagine glycan is attached at Asn80. Cu cation is bound by residues His84, His86, His129, and His131. N-linked (GlcNAc...) asparagine glycans are attached at residues Asn189, Asn300, Asn340, Asn392, Asn402, Asn410, and Asn443. The Plastocyanin-like 3 domain occupies 428 to 564 (DFPAKPPVKF…AMAFLVENGN (137 aa)). Cu cation is bound by residues His481, His484, His486, His543, Cys544, His545, and His549.

Belongs to the multicopper oxidase family. Cu cation serves as cofactor. Ubiquitous and constitutive.

It localises to the secreted. It is found in the extracellular space. The protein localises to the apoplast. It carries out the reaction 4 hydroquinone + O2 = 4 benzosemiquinone + 2 H2O. Functionally, lignin degradation and detoxification of lignin-derived products. In Arabidopsis thaliana (Mouse-ear cress), this protein is Laccase-5 (LAC5).